The following is a 175-amino-acid chain: Large ribosomal subunit protein uL10 (175 aa).

The protein belongs to the universal ribosomal protein uL10 family. Part of the ribosomal stalk of the 50S ribosomal subunit. The N-terminus interacts with L11 and the large rRNA to form the base of the stalk. The C-terminus forms an elongated spine to which L12 dimers bind in a sequential fashion forming a multimeric L10(L12)X complex.

Functionally, forms part of the ribosomal stalk, playing a central role in the interaction of the ribosome with GTP-bound translation factors. This Prochlorococcus marinus (strain NATL2A) protein is Large ribosomal subunit protein uL10.